An 81-amino-acid polypeptide reads, in one-letter code: UPF0386 protein Smed_0945 (81 aa).

It belongs to the UPF0386 family.

This is UPF0386 protein Smed_0945 from Sinorhizobium medicae (strain WSM419) (Ensifer medicae).